The following is a 163-amino-acid chain: uncharacterized protein (163 aa).

This is an uncharacterized protein from Schizosaccharomyces pombe (strain 972 / ATCC 24843) (Fission yeast).